The following is a 45-amino-acid chain: Large ribosomal subunit protein bL34 (45 aa).

The protein belongs to the bacterial ribosomal protein bL34 family.

This Clavibacter michiganensis subsp. michiganensis (strain NCPPB 382) protein is Large ribosomal subunit protein bL34.